The following is a 363-amino-acid chain: GTP-binding protein 1 (363 aa).

An OBG-type G domain is found at 63 to 287; that stretch reads ARVAFIGFPS…LKERIWEELN (225 aa). GTP contacts are provided by residues 69–76, 115–119, and 246–249; these read GFPSVGKS, DLPGI, and KIDA. In terms of domain architecture, TGS spans 287-362; it reads NLYRIYTKRK…EEGDVVTIVT (76 aa).

This sequence belongs to the TRAFAC class OBG-HflX-like GTPase superfamily. OBG GTPase family.

This chain is GTP-binding protein 1 (gtp1), found in Schizosaccharomyces pombe (strain 972 / ATCC 24843) (Fission yeast).